The primary structure comprises 517 residues: Optineurin (517 aa).

Coiled-coil stretches lie at residues 15-127 (NLGS…DLVA) and 174-453 (KAES…LGRH). Disordered regions lie at residues 216-237 (KLEH…TNAS) and 454-488 (SMSE…WQQQ). Positions 222-237 (SSAQTSLPSAAETNAS) are enriched in polar residues. The segment at 487-517 (QQNIPDHACPKCGEVLPDLDSLQIHIMDCII) adopts a CCHC NOA-type zinc-finger fold. Zn(2+) is bound by residues C495, C498, H511, and C515.

The protein resides in the cytoplasm. It is found in the perinuclear region. Its subcellular location is the golgi apparatus. The protein localises to the trans-Golgi network. It localises to the cytoplasmic vesicle. The protein resides in the recycling endosome. It is found in the autophagosome. Functionally, probably part of the TNF-alpha signaling pathway that can shift the equilibrium toward induction of cell death. May act by regulating membrane trafficking and cellular morphogenesis. The sequence is that of Optineurin (optn) from Danio rerio (Zebrafish).